Here is a 231-residue protein sequence, read N- to C-terminus: Large ribosomal subunit protein uL1 (231 aa).

The protein belongs to the universal ribosomal protein uL1 family. As to quaternary structure, part of the 50S ribosomal subunit.

Functionally, binds directly to 23S rRNA. The L1 stalk is quite mobile in the ribosome, and is involved in E site tRNA release. Protein L1 is also a translational repressor protein, it controls the translation of the L11 operon by binding to its mRNA. This chain is Large ribosomal subunit protein uL1, found in Azoarcus sp. (strain BH72).